The following is a 181-amino-acid chain: Large ribosomal subunit protein uL5 (181 aa).

Belongs to the universal ribosomal protein uL5 family. As to quaternary structure, part of the 50S ribosomal subunit; part of the 5S rRNA/L5/L18/L25 subcomplex. Contacts the 5S rRNA and the P site tRNA. Forms a bridge to the 30S subunit in the 70S ribosome.

Its function is as follows. This is one of the proteins that bind and probably mediate the attachment of the 5S RNA into the large ribosomal subunit, where it forms part of the central protuberance. In the 70S ribosome it contacts protein S13 of the 30S subunit (bridge B1b), connecting the 2 subunits; this bridge is implicated in subunit movement. Contacts the P site tRNA; the 5S rRNA and some of its associated proteins might help stabilize positioning of ribosome-bound tRNAs. The protein is Large ribosomal subunit protein uL5 of Helicobacter pylori (strain Shi470).